The chain runs to 188 residues: Large ribosomal subunit protein eL18 (188 aa).

Belongs to the eukaryotic ribosomal protein eL18 family.

The protein resides in the cytoplasm. In Drosophila melanogaster (Fruit fly), this protein is Large ribosomal subunit protein eL18 (RpL18).